The sequence spans 87 residues: Long neurotoxin homolog (87 aa).

Positions 1 to 21 (MKTLLLTLVVVTIVCLDLGYT) are cleaved as a signal peptide. Disulfide bonds link Cys-24/Cys-47, Cys-27/Cys-32, Cys-40/Cys-64, Cys-68/Cys-80, and Cys-81/Cys-86.

In terms of tissue distribution, expressed by the venom gland.

The protein resides in the secreted. In terms of biological role, inhibits carbachol-induced muscle contraction in a reversible manner. The protein is Long neurotoxin homolog of Bungarus multicinctus (Many-banded krait).